Consider the following 111-residue polypeptide: Repressed By RIM101 protein 1 (111 aa).

The first 19 residues, 1-19 (MKFSTTLLALTASIAAVMS), serve as a signal peptide directing secretion. Residues 71–90 (SGASSATGGSSAAKSGSSSG) are disordered. Ser81 carries the GPI-anchor amidated serine lipid modification. Residues 82–111 (AAKSGSSSGAGFAPVAGAGSLAAIAGLLLL) constitute a propeptide, removed in mature form.

Post-translationally, the GPI-anchor is attached to the protein in the endoplasmic reticulum and serves to target the protein to the cell surface. There, the glucosamine-inositol phospholipid moiety is cleaved off and the GPI-modified mannoprotein is covalently attached via its lipidless GPI glycan remnant to the 1,6-beta-glucan of the outer cell wall layer.

It localises to the secreted. Its subcellular location is the cell wall. The protein resides in the membrane. Functionally, probable cell wall protein required for filamentation at low pH. This Candida albicans (strain SC5314 / ATCC MYA-2876) (Yeast) protein is Repressed By RIM101 protein 1 (RBR1).